A 134-amino-acid polypeptide reads, in one-letter code: MSWQAYVDDHLMCDIEGHEGHRLTAAAIVGHDGSVWAQSATFPQFKPEEMNGIMTDFNEPGHLAPTGLHLGGTKYMVIQGEAGAVIRGKKGSGGITIKKTGQAVVCGIYEEPVTPGQCNMVVERLGDYLIEQGL.

Cysteines 13 and 118 form a disulfide. Positions 84-100 (AVIRGKKGSGGITIKKT) match the Involved in PIP2 interaction motif. T114 carries the phosphothreonine modification.

The protein belongs to the profilin family. Occurs in many kinds of cells as a complex with monomeric actin in a 1:1 ratio. Post-translationally, phosphorylated by MAP kinases.

Its subcellular location is the cytoplasm. It is found in the cytoskeleton. In terms of biological role, binds to actin and affects the structure of the cytoskeleton. At high concentrations, profilin prevents the polymerization of actin, whereas it enhances it at low concentrations. This chain is Profilin-2, found in Olea europaea (Common olive).